The sequence spans 98 residues: NADH-ubiquinone oxidoreductase chain 4L (98 aa).

3 helical membrane passes run 1 to 21 (MSPM…GLAF), 26 to 46 (LLSA…ATAT), and 58 to 78 (ILPM…LAIL).

It belongs to the complex I subunit 4L family.

It localises to the mitochondrion membrane. The catalysed reaction is a ubiquinone + NADH + 5 H(+)(in) = a ubiquinol + NAD(+) + 4 H(+)(out). Core subunit of the mitochondrial membrane respiratory chain NADH dehydrogenase (Complex I) which catalyzes electron transfer from NADH through the respiratory chain, using ubiquinone as an electron acceptor. Part of the enzyme membrane arm which is embedded in the lipid bilayer and involved in proton translocation. The chain is NADH-ubiquinone oxidoreductase chain 4L (MT-ND4L) from Scyliorhinus canicula (Small-spotted catshark).